Consider the following 700-residue polypeptide: Small ribosomal subunit protein uS3c (700 aa).

Insert regions lie at residues 88 to 196 and 282 to 587; these read NCHM…LGKF and KPCT…FQTR.

It belongs to the universal ribosomal protein uS3 family. Part of the 30S ribosomal subunit.

The protein localises to the plastid. It localises to the chloroplast. This is Small ribosomal subunit protein uS3c (rps3) from Tetradesmus obliquus (Green alga).